The sequence spans 419 residues: MAKEGVEKAEETEQMIEKEAGKEPAEGGGGDGSHRLGDAQEMRAVVLAGFGGLNKLRLFRKAMPEPQDGELKIRVKACGLNFIDLMVRQGNIDNPPKTPLVPGFECSGIVEALGDSVKGYEIGDRVMAFVNYNAWAEVVCTPVEFVYKIPDDMSFSEAAAFPMNFVTAYVMLFEVANLREGMSVLVHSAGGGVGQAVAQLCSTVPNVTVFGTASTFKHEAIKDSVTHLFDRNADYVQEVKRISAEGVDIVLDCLCGDNTGKGLSLLKPLGTYILYGSSNMVTGETKSFFSFAKSWWQVEKVNPIKLYEENKVIAGFSLLNLLFKQGRAGLIRGVVEKLIGLYNQKKIKPVVDSLWALEEVKEAMQRIHDRGNIGKLILDVEKTPTPLMANDSTETSEAGEEEEDHEGDSENKERMPFIQ.

The segment covering 1-25 (MAKEGVEKAEETEQMIEKEAGKEPA) has biased composition (basic and acidic residues). 2 disordered regions span residues 1–36 (MAKE…SHRL) and 384–419 (PTPL…PFIQ). Ser392 carries the post-translational modification Phosphoserine. A phosphothreonine mark is found at Thr393 and Thr395. The residue at position 396 (Ser396) is a Phosphoserine. Positions 397-407 (EAGEEEEDHEG) are enriched in acidic residues. The span at 408-419 (DSENKERMPFIQ) shows a compositional bias: basic and acidic residues.

This sequence belongs to the zinc-containing alcohol dehydrogenase family. Quinone oxidoreductase subfamily. Detected in skin fibroblasts.

The polypeptide is Synaptic vesicle membrane protein VAT-1 homolog-like (VAT1L) (Homo sapiens (Human)).